Consider the following 764-residue polypeptide: Subtilisin-like protease SBT1.6 (764 aa).

The first 20 residues, 1-20 (MASSTIVLLLFLSFPFISFA), serve as a signal peptide directing secretion. In terms of domain architecture, Inhibitor I9 spans 46–99 (HWYSTEFAEESRIVHVYHTVFHGFSAVVTPDEADNLRNHPAVLAVFEDRRRELH). In terms of domain architecture, Peptidase S8 spans 103 to 606 (SPQFLGLQNQ…SGHLNLGRAM (504 aa)). Asp131 acts as the Charge relay system in catalysis. Asn191 carries an N-linked (GlcNAc...) asparagine glycan. The Charge relay system role is filled by His205. A PA domain is found at 377–457 (SSASLCMENT…NEGDRIKAYA (81 aa)). The active-site Charge relay system is Ser538. Asn578 is a glycosylation site (N-linked (GlcNAc...) asparagine).

This sequence belongs to the peptidase S8 family. Expressed in roots, leaves and flowers of mature plants.

The sequence is that of Subtilisin-like protease SBT1.6 from Arabidopsis thaliana (Mouse-ear cress).